Here is a 528-residue protein sequence, read N- to C-terminus: Transcriptional activator protein UGA3 (528 aa).

The zn(2)-C6 fungal-type DNA-binding region spans 17–44 (CITCKIRKKRCSEDKPVCRDCRRLSFPC). Residues 55 to 62 (SLKKIKAD) carry the Nuclear localization signal motif.

In terms of assembly, UGA3 proteins associate in oligomers, at least in the presence of inducer.

Its subcellular location is the nucleus. Functionally, GABA-dependent positive regulation of genes required for catabolism of GABA (UGA4, UGA1, and UGA2). This is Transcriptional activator protein UGA3 (UGA3) from Saccharomyces cerevisiae (strain ATCC 204508 / S288c) (Baker's yeast).